Consider the following 72-residue polypeptide: Mitotic-spindle organizing protein 1 (72 aa).

Belongs to the MOZART1 family. In terms of assembly, part of the gamma-tubulin complex.

The protein resides in the cytoplasm. It localises to the cytoskeleton. The protein localises to the microtubule organizing center. It is found in the spindle pole body. Required for gamma-tubulin complex recruitment to the microtubule organizing center (MTOC). This Coccidioides immitis (strain RS) (Valley fever fungus) protein is Mitotic-spindle organizing protein 1.